The chain runs to 150 residues: uncharacterized protein (150 aa).

It is found in the plastid. The protein localises to the chloroplast. This is an uncharacterized protein from Pyropia yezoensis (Susabi-nori).